The primary structure comprises 680 residues: Glutamine-dependent NAD(+) synthetase (680 aa).

The 265-residue stretch at 12-276 (VRVAACTHHA…EHRSVADVDT (265 aa)) folds into the CN hydrolase domain. The active-site Proton acceptor; for glutaminase activity is Glu52. Catalysis depends on Lys121, which acts as the For glutaminase activity. Tyr127 is an L-glutamine binding site. Cys176 functions as the Nucleophile; for glutaminase activity in the catalytic mechanism. Positions 203 and 209 each coordinate L-glutamine. 366–373 (GVSGGLDS) contributes to the ATP binding site. Residue Asn456 participates in deamido-NAD(+) binding. Residue Thr480 coordinates ATP. Deamido-NAD(+) contacts are provided by residues Glu485, 490 to 493 (WSTY), and Lys636.

In the C-terminal section; belongs to the NAD synthetase family.

The catalysed reaction is deamido-NAD(+) + L-glutamine + ATP + H2O = L-glutamate + AMP + diphosphate + NAD(+) + H(+). It participates in cofactor biosynthesis; NAD(+) biosynthesis; NAD(+) from deamido-NAD(+) (L-Gln route): step 1/1. Catalyzes the ATP-dependent amidation of deamido-NAD to form NAD. Uses L-glutamine as a nitrogen source. This chain is Glutamine-dependent NAD(+) synthetase, found in Mycobacterium leprae (strain TN).